A 587-amino-acid chain; its full sequence is Beta-(1--&gt;2)glucan export ATP-binding/permease protein NdvA (587 aa).

Residues 21 to 301 enclose the ABC transmembrane type-1 domain; that stretch reads VSLVVIANIV…MRQFATQIFE (281 aa). 6 helical membrane-spanning segments follow: residues 23–43, 57–77, 126–146, 158–178, 248–268, and 272–292; these read LVVIANIVLATITIAEPILFG, PILFMWAAFAVFNTVAFVLVS, LFGLWLEFMRNHLSTVIALAL, LSAVLIVLGIAYWLIGRVVMS, MASTIAMMVVLIIGTMLVQSG, and IGDVIAFIGFANLLIARLDLM. The region spanning 335-569 is the ABC transporter domain; that stretch reads IEFRDVSFGF…NGRFAALLRA (235 aa). An ATP-binding site is contributed by 368 to 375; that stretch reads GPTGAGKT.

The protein belongs to the ABC transporter superfamily. Beta-(1--&gt;2)glucan exporter (TC 3.A.1.108.1) family. Homodimer.

It is found in the cell inner membrane. The enzyme catalyses [(1-&gt;2)-beta-D-glucosyl](n)(in) + ATP + H2O = [(1-&gt;2)-beta-D-glucosyl](n)(out) + ADP + phosphate + H(+). Its function is as follows. Involved in beta-(1--&gt;2)glucan export. Transmembrane domains (TMD) form a pore in the inner membrane and the ATP-binding domain (NBD) is responsible for energy generation. The chain is Beta-(1--&gt;2)glucan export ATP-binding/permease protein NdvA from Rhizobium etli (strain ATCC 51251 / DSM 11541 / JCM 21823 / NBRC 15573 / CFN 42).